The chain runs to 133 residues: Osteocrin (133 aa).

Positions 1–27 are cleaved as a signal peptide; it reads MLDWRLASAHFILAVTLTLWSSGKVLS. Arginine 132 carries the arginine amide modification.

Belongs to the Osteocrin family. Interacts with NPR3. As to expression, enriched in neocortical regions of the developing cerebral cortex. Not expressed in other compartments of the neocortical wall or in brain regions such as the hippocampus, striatum, mediodorsal nucleus of the thalamus and cerebellum. Also expressed in bone. In developing neonatal rib bone, present at high level in osteoblasts on bone-forming surfaces, in newly incorporated osteocytes and in some late hypertrophic chondrocytes (at protein level). In adult bone, localizes specifically to osteoblasts and young osteocytes at bone-forming sites (at protein level).

The protein localises to the secreted. Hormone that acts as a regulator of dendritic growth in the developing cerebral cortex in response to sensory experience. Induced in the brain following membrane depolarization and inhibits dendritic branching in neurons of the developing cortex. Probably acts by binding to natriuretic peptide receptor NPR3/NPR-C, thereby preventing binding between NPR3/NPR-C and natriuretic peptides, leading to increase cGMP production. The chain is Osteocrin from Homo sapiens (Human).